Here is a 66-residue protein sequence, read N- to C-terminus: Large ribosomal subunit protein bL35 (66 aa).

This sequence belongs to the bacterial ribosomal protein bL35 family.

This chain is Large ribosomal subunit protein bL35, found in Brucella canis (strain ATCC 23365 / NCTC 10854 / RM-666).